The following is a 1101-amino-acid chain: Furin-like protease 1, isoform 1-CRR (1101 aa).

Residues 1–57 (MKNDVVRWSRQPTSNTTNSSSSSRSDSNSTHKHRSKSNKLNARQLGSNAARSCQQRS) are disordered. Positions 13–28 (TSNTTNSSSSSRSDSN) are enriched in low complexity. N-linked (GlcNAc...) asparagine glycosylation is found at Asn15, Asn18, and Asn28. Residues 38 to 57 (NKLNARQLGSNAARSCQQRS) are compositionally biased toward polar residues. A glycan (N-linked (GlcNAc...) asparagine) is linked at Asn108. The helical transmembrane segment at 119–139 (VFLLALQFSAVVFLCNINVGF) threads the bilayer. A compositionally biased stretch (low complexity) spans 150-163 (SAGGSSPAAPSSAP). A disordered region spans residues 150 to 187 (SAGGSSPAAPSSAPSSPPTVAVPPPPPPSSALKVDPNG). Pro residues predominate over residues 164–178 (SSPPTVAVPPPPPPS). N-linked (GlcNAc...) asparagine glycosylation is present at Asn333. One can recognise a Peptidase S8 domain in the interval 340-654 (MWYLNRGGGL…YGLMDAAEMV (315 aa)). Residues Asp372 and His413 each act as charge relay system in the active site. Residue Asn426 is glycosylated (N-linked (GlcNAc...) asparagine). Disulfide bonds link Cys430/Cys579 and Cys522/Cys552. Ser587 functions as the Charge relay system in the catalytic mechanism. N-linked (GlcNAc...) asparagine glycosylation is present at Asn606. The P/Homo B domain occupies 662-791 (AVPEQQRCEI…DMIFYGTETP (130 aa)). A disulfide bridge links Cys669 with Cys695. N-linked (GlcNAc...) asparagine glycans are attached at residues Asn727 and Asn859. Residues 886–915 (EEDEQDDEVTRGPVNPYSSSPMDHSLLMSN) form a disordered region. A compositionally biased stretch (polar residues) spans 901-915 (PYSSSPMDHSLLMSN). N-linked (GlcNAc...) asparagine glycosylation is present at Asn978. The helical transmembrane segment at 1014 to 1034 (TVLLLVSVIFTLMGVAVAGGI) threads the bilayer.

It belongs to the peptidase S8 family. Furin subfamily. The cofactor is Ca(2+). In adults, isoform 1-CRR is expressed in CNS, fat body, and female reproductive tissues, and in embryos, in anal pads, hindgut, developing antennomaxillary complex, oenocytes, clipeolabrum, pharynx, trachea, CNS and developing posterior spiracles.

It is found in the golgi apparatus membrane. It carries out the reaction Release of mature proteins from their proproteins by cleavage of -Arg-Xaa-Yaa-Arg-|-Zaa- bonds, where Xaa can be any amino acid and Yaa is Arg or Lys. Releases albumin, complement component C3 and von Willebrand factor from their respective precursors.. Functionally, furin is likely to represent the ubiquitous endoprotease activity within constitutive secretory pathways and capable of cleavage at the RX(K/R)R consensus motif. The chain is Furin-like protease 1, isoform 1-CRR (Fur1) from Drosophila melanogaster (Fruit fly).